A 40-amino-acid chain; its full sequence is MEALVYTFLLVGTLGIIFFAIFFRDPPKVPSKGVPSKGKK.

Residues 3–23 traverse the membrane as a helical segment; that stretch reads ALVYTFLLVGTLGIIFFAIFF.

Belongs to the PsbT family. In terms of assembly, PSII is composed of 1 copy each of membrane proteins PsbA, PsbB, PsbC, PsbD, PsbE, PsbF, PsbH, PsbI, PsbJ, PsbK, PsbL, PsbM, PsbT, PsbY, PsbZ, Psb30/Ycf12, at least 3 peripheral proteins of the oxygen-evolving complex and a large number of cofactors. It forms dimeric complexes.

The protein localises to the plastid. The protein resides in the chloroplast thylakoid membrane. Functionally, found at the monomer-monomer interface of the photosystem II (PS II) dimer, plays a role in assembly and dimerization of PSII. PSII is a light-driven water plastoquinone oxidoreductase, using light energy to abstract electrons from H(2)O, generating a proton gradient subsequently used for ATP formation. The sequence is that of Photosystem II reaction center protein T from Anthoceros angustus (Hornwort).